Here is a 353-residue protein sequence, read N- to C-terminus: Photosystem II D2 protein (353 aa).

An N-acetylthreonine modification is found at T2. T2 bears the Phosphothreonine mark. Residues 41 to 61 (CAYFALGGWFTGTTFVTSWYT) form a helical membrane-spanning segment. Position 118 (H118) interacts with chlorophyll a. The helical transmembrane segment at 125-141 (GFMLRQFELARSVQLRP) threads the bilayer. Pheophytin a-binding residues include Q130 and N143. Residues 153–166 (VFVSVFLIYPLGQS) form a helical membrane-spanning segment. H198 contacts chlorophyll a. Residues 208 to 228 (AALLCAIHGATVENTLFEDGD) traverse the membrane as a helical segment. A plastoquinone is bound by residues H215 and F262. Fe cation is bound at residue H215. H269 is a binding site for Fe cation. Residues 279–295 (GLWMSALGVVGLALNLR) traverse the membrane as a helical segment.

It belongs to the reaction center PufL/M/PsbA/D family. PSII is composed of 1 copy each of membrane proteins PsbA, PsbB, PsbC, PsbD, PsbE, PsbF, PsbH, PsbI, PsbJ, PsbK, PsbL, PsbM, PsbT, PsbX, PsbY, PsbZ, Psb30/Ycf12, at least 3 peripheral proteins of the oxygen-evolving complex and a large number of cofactors. It forms dimeric complexes. Requires The D1/D2 heterodimer binds P680, chlorophylls that are the primary electron donor of PSII, and subsequent electron acceptors. It shares a non-heme iron and each subunit binds pheophytin, quinone, additional chlorophylls, carotenoids and lipids. There is also a Cl(-1) ion associated with D1 and D2, which is required for oxygen evolution. The PSII complex binds additional chlorophylls, carotenoids and specific lipids. as cofactor.

It localises to the plastid. The protein localises to the chloroplast thylakoid membrane. It catalyses the reaction 2 a plastoquinone + 4 hnu + 2 H2O = 2 a plastoquinol + O2. Functionally, photosystem II (PSII) is a light-driven water:plastoquinone oxidoreductase that uses light energy to abstract electrons from H(2)O, generating O(2) and a proton gradient subsequently used for ATP formation. It consists of a core antenna complex that captures photons, and an electron transfer chain that converts photonic excitation into a charge separation. The D1/D2 (PsbA/PsbD) reaction center heterodimer binds P680, the primary electron donor of PSII as well as several subsequent electron acceptors. D2 is needed for assembly of a stable PSII complex. The sequence is that of Photosystem II D2 protein from Populus deltoides (Eastern poplar).